Consider the following 111-residue polypeptide: Probable 4-amino-4-deoxy-L-arabinose-phosphoundecaprenol flippase subunit ArnE (111 aa).

The Cytoplasmic portion of the chain corresponds to 1–35; the sequence is MIWLTLVFASLLSVAGQLCQKQATCFATVNKRRKH. The chain crosses the membrane as a helical span at residues 36 to 56; it reads IVLWLGLALACLGLAMVLWLL. The region spanning 40–109 is the EamA domain; sequence LGLALACLGL…IIGGIVILGS (70 aa). Over 57–60 the chain is Periplasmic; the sequence is VLQN. The helical transmembrane segment at 61-81 threads the bilayer; that stretch reads VPVGIAYPMLSLNFVWVTLAA. At 82–87 the chain is on the cytoplasmic side; the sequence is VKLWHE. The helical transmembrane segment at 88-108 threads the bilayer; sequence PVSLRHWCGVAFIIGGIVILG. The Periplasmic segment spans residues 109 to 111; it reads STV.

The protein belongs to the ArnE family. As to quaternary structure, heterodimer of ArnE and ArnF.

It is found in the cell inner membrane. Its pathway is bacterial outer membrane biogenesis; lipopolysaccharide biosynthesis. Translocates 4-amino-4-deoxy-L-arabinose-phosphoundecaprenol (alpha-L-Ara4N-phosphoundecaprenol) from the cytoplasmic to the periplasmic side of the inner membrane. The protein is Probable 4-amino-4-deoxy-L-arabinose-phosphoundecaprenol flippase subunit ArnE of Escherichia coli O6:H1 (strain CFT073 / ATCC 700928 / UPEC).